Reading from the N-terminus, the 226-residue chain is RLA class II histocompatibility antigen, DP alpha-1 chain (226 aa).

Residues 1–189 (EHVSVFVIFA…PIQMPETTET (189 aa)) lie on the Extracellular side of the membrane. N-linked (GlcNAc...) asparagine glycans are attached at residues asparagine 75 and asparagine 115. One can recognise an Ig-like C1-type domain in the interval 84–176 (PEVIVFPKEP…LDAPLLTHWE (93 aa)). The cysteines at positions 104 and 160 are disulfide-linked. The helical transmembrane segment at 190–210 (VVCALGLVVGLAGVVVGIVLI) threads the bilayer. Topologically, residues 211-226 (TKALRSSPDPRARRPL) are cytoplasmic.

It belongs to the MHC class II family.

The protein localises to the membrane. The chain is RLA class II histocompatibility antigen, DP alpha-1 chain from Oryctolagus cuniculus (Rabbit).